Consider the following 125-residue polypeptide: Small ribosomal subunit protein eS8 (125 aa).

The interval 1-36 is disordered; that stretch reads MKDQGRSTRKRTGGRLHDVSKKKRHQLGREPAETTV. Basic residues predominate over residues 7-26; sequence STRKRTGGRLHDVSKKKRHQ. Basic and acidic residues predominate over residues 27–36; the sequence is LGREPAETTV.

It belongs to the eukaryotic ribosomal protein eS8 family. As to quaternary structure, part of the 30S ribosomal subunit.

The protein is Small ribosomal subunit protein eS8 of Haloquadratum walsbyi (strain DSM 16790 / HBSQ001).